The sequence spans 579 residues: ERV-BabFcenv provirus ancestral Env polyprotein (579 aa).

The signal sequence occupies residues 1-22 (MISAVLNLPSTPLLPLLWFTLI). The segment at 23 to 387 (IPASLTNPKF…LSSSNNIQKQ (365 aa)) is surface protein. Over 23 to 523 (IPASLTNPKF…VWLLPVVQQM (501 aa)) the chain is Extracellular. N-linked (GlcNAc...) asparagine glycosylation is found at Asn135, Asn203, Asn242, and Asn251. The CXXC signature appears at 255–258 (CFLC). Asn276, Asn312, and Asn337 each carry an N-linked (GlcNAc...) asparagine glycan. Residues 388 to 408 (AVFLPLIIGVSLASSLVASGL) are fusion peptide. Residues 388 to 579 (AVFLPLIIGV…LPTSDPNYAP (192 aa)) form a transmembrane protein region. Positions 453–469 (AQNRRALDLLTAEKGGT) match the CKS-17 motif. Cysteines 470 and 477 form a disulfide. Positions 470-478 (CLFLGEECC) match the CX6CC motif. The N-linked (GlcNAc...) asparagine glycan is linked to Asn482. The helical transmembrane segment at 524–544 (LPFLIPILILCLMLCLAPILI) threads the bilayer. Over 545 to 579 (KFLRARVQEITRVTFNQMLLHPYTQLPTSDPNYAP) the chain is Cytoplasmic.

The protein belongs to the gamma type-C retroviral envelope protein family. HERV class-I F(c)1 env subfamily. Specific enzymatic cleavages in vivo yield the mature SU and TM proteins. In terms of processing, the CXXC motif is highly conserved across a broad range of retroviral envelope proteins. It is thought to participate in the formation of a labile disulfide bond possibly with the CX6CC motif present in the transmembrane domain.

The protein localises to the cell membrane. Its function is as follows. Retroviral envelope proteins mediate receptor recognition and membrane fusion during early infection. Endogenous envelope proteins may have kept, lost or modified their original function during evolution. The chain is ERV-BabFcenv provirus ancestral Env polyprotein from Papio anubis (Olive baboon).